A 310-amino-acid polypeptide reads, in one-letter code: Nodulation protein D 1 (310 aa).

Residues leucine 6 to threonine 63 enclose the HTH lysR-type domain. The segment at residues leucine 23–alanine 42 is a DNA-binding region (H-T-H motif).

It belongs to the LysR transcriptional regulatory family.

Its function is as follows. NodD regulates the expression of the nodABCFE genes which encode other nodulation proteins. NodD is also a negative regulator of its own expression. Binds flavonoids as inducers. This chain is Nodulation protein D 1 (nodD1), found in Neorhizobium galegae (Rhizobium galegae).